A 201-amino-acid polypeptide reads, in one-letter code: FMN-dependent NADH:quinone oxidoreductase (201 aa).

FMN contacts are provided by residues Ser10, 16–18 (SQS), 95–98 (MYNF), and 139–142 (TTGG).

It belongs to the azoreductase type 1 family. As to quaternary structure, homodimer. FMN serves as cofactor.

The catalysed reaction is 2 a quinone + NADH + H(+) = 2 a 1,4-benzosemiquinone + NAD(+). It catalyses the reaction N,N-dimethyl-1,4-phenylenediamine + anthranilate + 2 NAD(+) = 2-(4-dimethylaminophenyl)diazenylbenzoate + 2 NADH + 2 H(+). Its function is as follows. Quinone reductase that provides resistance to thiol-specific stress caused by electrophilic quinones. Functionally, also exhibits azoreductase activity. Catalyzes the reductive cleavage of the azo bond in aromatic azo compounds to the corresponding amines. This is FMN-dependent NADH:quinone oxidoreductase from Tolumonas auensis (strain DSM 9187 / NBRC 110442 / TA 4).